Consider the following 214-residue polypeptide: Ribosomal RNA small subunit methyltransferase G (214 aa).

Residues Gly81, Met86, 132 to 133, and Arg147 contribute to the S-adenosyl-L-methionine site; that span reads VE.

Belongs to the methyltransferase superfamily. RNA methyltransferase RsmG family.

The protein localises to the cytoplasm. It carries out the reaction guanosine(527) in 16S rRNA + S-adenosyl-L-methionine = N(7)-methylguanosine(527) in 16S rRNA + S-adenosyl-L-homocysteine. Functionally, specifically methylates the N7 position of guanine in position 527 of 16S rRNA. The sequence is that of Ribosomal RNA small subunit methyltransferase G from Pseudomonas paraeruginosa (strain DSM 24068 / PA7) (Pseudomonas aeruginosa (strain PA7)).